The sequence spans 399 residues: Glutathione S-transferase LANCL1 (399 aa).

N-acetylalanine is present on Ala2. An N6-acetyllysine modification is found at Lys142. Cys276 contacts Zn(2+). Lys317 provides a ligand contact to glutathione. Residues Cys322 and His323 each contribute to the Zn(2+) site. A glutathione-binding site is contributed by 364-367; the sequence is RTPD.

This sequence belongs to the LanC-like protein family. As to quaternary structure, interacts with the C-terminal of STOM. Interacts with the EPS8 SH3 domain. Interaction with EPS8 is inhibited by glutathione binding. (Microbial infection) Interacts with P.falciparum SBP1. Detected in erythrocytes, brain, kidney, testis, ovary, heart, lung, placenta and spleen (at protein level). Ubiquitous. Strongly expressed in brain, spinal cord, pituitary gland, kidney, heart, skeletal muscle, pancreas, ovary and testis.

It localises to the cytoplasm. The protein localises to the cell membrane. The enzyme catalyses RX + glutathione = an S-substituted glutathione + a halide anion + H(+). It carries out the reaction 1-chloro-2,4-dinitrobenzene + glutathione = 2,4-dinitrophenyl-S-glutathione + chloride + H(+). In terms of biological role, functions as a glutathione transferase. Catalyzes conjugation of the glutathione (GSH) to artificial substrates 1-chloro-2,4-dinitrobenzene (CDNB) and p-nitrophenyl acetate. Mitigates neuronal oxidative stress during normal postnatal development and in response to oxidative stresses probably through GSH antioxidant defense mechanism. May play a role in EPS8 signaling. Binds glutathione. This chain is Glutathione S-transferase LANCL1, found in Homo sapiens (Human).